The chain runs to 317 residues: Beta-ketoacyl-[acyl-carrier-protein] synthase III (317 aa).

Active-site residues include Cys-112 and His-244. Residues 245 to 249 are ACP-binding; the sequence is QANLR. Asn-274 is an active-site residue.

Belongs to the thiolase-like superfamily. FabH family. In terms of assembly, homodimer.

The protein resides in the cytoplasm. The catalysed reaction is malonyl-[ACP] + acetyl-CoA + H(+) = 3-oxobutanoyl-[ACP] + CO2 + CoA. It participates in lipid metabolism; fatty acid biosynthesis. In terms of biological role, catalyzes the condensation reaction of fatty acid synthesis by the addition to an acyl acceptor of two carbons from malonyl-ACP. Catalyzes the first condensation reaction which initiates fatty acid synthesis and may therefore play a role in governing the total rate of fatty acid production. Possesses both acetoacetyl-ACP synthase and acetyl transacylase activities. Its substrate specificity determines the biosynthesis of branched-chain and/or straight-chain of fatty acids. The sequence is that of Beta-ketoacyl-[acyl-carrier-protein] synthase III from Pectobacterium atrosepticum (strain SCRI 1043 / ATCC BAA-672) (Erwinia carotovora subsp. atroseptica).